Reading from the N-terminus, the 311-residue chain is Malate dehydrogenase (311 aa).

Residues 7-13 (GAAGGIG) and Asp-34 each bind NAD(+). Substrate is bound by residues Arg-81 and Arg-87. NAD(+) is bound by residues Asn-94 and 117-119 (ITN). Residues Asn-119 and Arg-153 each coordinate substrate. His-177 (proton acceptor) is an active-site residue. Met-227 lines the NAD(+) pocket.

This sequence belongs to the LDH/MDH superfamily. MDH type 1 family. As to quaternary structure, homodimer.

The catalysed reaction is (S)-malate + NAD(+) = oxaloacetate + NADH + H(+). Catalyzes the reversible oxidation of malate to oxaloacetate. This Haemophilus influenzae (strain 86-028NP) protein is Malate dehydrogenase.